We begin with the raw amino-acid sequence, 334 residues long: Ornithine carbamoyltransferase (334 aa).

Residues 57–60 (STRT), Gln84, Arg108, and 135–138 (HPTQ) each bind carbamoyl phosphate. L-ornithine is bound by residues Asn169, Asp233, and 237-238 (SM). Residues 275–276 (CL) and Arg320 each bind carbamoyl phosphate.

Belongs to the aspartate/ornithine carbamoyltransferase superfamily. OTCase family.

The protein resides in the cytoplasm. The enzyme catalyses carbamoyl phosphate + L-ornithine = L-citrulline + phosphate + H(+). Its pathway is amino-acid biosynthesis; L-arginine biosynthesis; L-arginine from L-ornithine and carbamoyl phosphate: step 1/3. Its function is as follows. Reversibly catalyzes the transfer of the carbamoyl group from carbamoyl phosphate (CP) to the N(epsilon) atom of ornithine (ORN) to produce L-citrulline. In Vibrio parahaemolyticus serotype O3:K6 (strain RIMD 2210633), this protein is Ornithine carbamoyltransferase.